The following is a 160-amino-acid chain: MSETPKDQGPSSPSPSPSPSAASPMPLADNEVAGSGASSPNLPLTMSASVVLADLPRDATAALEAAGSFKTDKIVVRFKPVGSAPLLAQDVCKISATRRFEEVVRYLRKKLRCKETDSVFLYVNSAFAPSLDEVVGNLHQCFKNSHGQLVVAYSLTPAFG.

A disordered region spans residues 1-40; the sequence is MSETPKDQGPSSPSPSPSPSAASPMPLADNEVAGSGASSP. A Glycyl lysine isopeptide (Gly-Lys) (interchain with K-102 in ATG5) cross-link involves residue glycine 160.

The protein belongs to the ATG12 family. As to quaternary structure, forms a conjugate with ATG5. Forms a thioester bond with the 'Cys-196' of ATG10. Interacts with the ATG7 C-terminal 40 amino acids domain. The ATG12-ATG5 conjugate forms a complex with several units of ATG16. The ATG12-ATG5 conjugate also associates with ATG3.

The protein resides in the preautophagosomal structure membrane. In terms of biological role, ubiquitin-like protein involved in cytoplasm to vacuole transport (Cvt), autophagy vesicles formation, mitophagy, and nucleophagy. Conjugation with ATG5 through a ubiquitin-like conjugating system involving also ATG7 as an E1-like activating enzyme and ATG10 as an E2-like conjugating enzyme, is essential for its function. The ATG12-ATG5 conjugate acts as an E3-like enzyme which is required for lipidation of ATG8 and ATG8 association to the vesicle membranes. ATG12-ATG5 rearranges the ATG3 catalytic center and enhances its E2 activity. Autophagy is required for proper vegetative growth, asexual/sexual reproduction, and full virulence. Autophagy is particularly involved in the biosynthesis of deoxynivalenol (DON), an important virulence determinant. In Gibberella zeae (strain ATCC MYA-4620 / CBS 123657 / FGSC 9075 / NRRL 31084 / PH-1) (Wheat head blight fungus), this protein is Ubiquitin-like protein ATG12.